We begin with the raw amino-acid sequence, 436 residues long: Trigger factor (436 aa).

In terms of domain architecture, PPIase FKBP-type spans 163 to 248 (GDRVTVDFEG…VKKIEAANLP (86 aa)).

The protein belongs to the FKBP-type PPIase family. Tig subfamily.

It localises to the cytoplasm. It carries out the reaction [protein]-peptidylproline (omega=180) = [protein]-peptidylproline (omega=0). Functionally, involved in protein export. Acts as a chaperone by maintaining the newly synthesized protein in an open conformation. Functions as a peptidyl-prolyl cis-trans isomerase. In Delftia acidovorans (strain DSM 14801 / SPH-1), this protein is Trigger factor.